A 156-amino-acid polypeptide reads, in one-letter code: 6,7-dimethyl-8-ribityllumazine synthase (156 aa).

5-amino-6-(D-ribitylamino)uracil contacts are provided by residues phenylalanine 22, 57-59 (AYE), and 81-83 (TVI). 86–87 (GT) is a (2S)-2-hydroxy-3-oxobutyl phosphate binding site. Histidine 89 functions as the Proton donor in the catalytic mechanism. Phenylalanine 114 serves as a coordination point for 5-amino-6-(D-ribitylamino)uracil. Arginine 128 serves as a coordination point for (2S)-2-hydroxy-3-oxobutyl phosphate.

This sequence belongs to the DMRL synthase family. Forms an icosahedral capsid composed of 60 subunits, arranged as a dodecamer of pentamers.

It carries out the reaction (2S)-2-hydroxy-3-oxobutyl phosphate + 5-amino-6-(D-ribitylamino)uracil = 6,7-dimethyl-8-(1-D-ribityl)lumazine + phosphate + 2 H2O + H(+). The protein operates within cofactor biosynthesis; riboflavin biosynthesis; riboflavin from 2-hydroxy-3-oxobutyl phosphate and 5-amino-6-(D-ribitylamino)uracil: step 1/2. Catalyzes the formation of 6,7-dimethyl-8-ribityllumazine by condensation of 5-amino-6-(D-ribitylamino)uracil with 3,4-dihydroxy-2-butanone 4-phosphate. This is the penultimate step in the biosynthesis of riboflavin. The protein is 6,7-dimethyl-8-ribityllumazine synthase of Cronobacter sakazakii (strain ATCC BAA-894) (Enterobacter sakazakii).